The chain runs to 179 residues: ATP synthase subunit delta (179 aa).

The protein belongs to the ATPase delta chain family. In terms of assembly, F-type ATPases have 2 components, F(1) - the catalytic core - and F(0) - the membrane proton channel. F(1) has five subunits: alpha(3), beta(3), gamma(1), delta(1), epsilon(1). F(0) has three main subunits: a(1), b(2) and c(10-14). The alpha and beta chains form an alternating ring which encloses part of the gamma chain. F(1) is attached to F(0) by a central stalk formed by the gamma and epsilon chains, while a peripheral stalk is formed by the delta and b chains.

It localises to the cell inner membrane. Functionally, f(1)F(0) ATP synthase produces ATP from ADP in the presence of a proton or sodium gradient. F-type ATPases consist of two structural domains, F(1) containing the extramembraneous catalytic core and F(0) containing the membrane proton channel, linked together by a central stalk and a peripheral stalk. During catalysis, ATP synthesis in the catalytic domain of F(1) is coupled via a rotary mechanism of the central stalk subunits to proton translocation. Its function is as follows. This protein is part of the stalk that links CF(0) to CF(1). It either transmits conformational changes from CF(0) to CF(1) or is implicated in proton conduction. The polypeptide is ATP synthase subunit delta (Burkholderia vietnamiensis (strain G4 / LMG 22486) (Burkholderia cepacia (strain R1808))).